The following is a 534-amino-acid chain: tRNA uridine(34) acetyltransferase (534 aa).

Residues 70 to 330 are radical S-adenosyl-L-methionine (rSAM); sequence KPVRTISGVA…GEFKPYREEE (261 aa). The Radical SAM core domain maps to 73–344; the sequence is RTISGVAVVA…ISYAKSIMPK (272 aa). 3 residues coordinate [4Fe-4S] cluster: Cys-90, Cys-95, and Cys-98. Lys-150 provides a ligand contact to acetyl-CoA. A disulfide bond links Cys-384 and Cys-389. Residues 387 to 534 enclose the N-acetyltransferase domain; it reads IRCREVGHVY…RVGAYMGKEL (148 aa). Residues 461–464, 485–487, and Tyr-518 contribute to the acetyl-CoA site; these read QLHV and YGR.

The protein belongs to the ELP3 family. [4Fe-4S] cluster serves as cofactor.

It catalyses the reaction uridine(34) in tRNA + acetyl-CoA + S-adenosyl-L-methionine + H2O = 5-(carboxymethyl)uridine(34) in tRNA + 5'-deoxyadenosine + L-methionine + CoA + 2 H(+). It functions in the pathway tRNA modification. In terms of biological role, tRNA uridine(34) acetyltransferase, which mediates formation of carboxymethyluridine in the wobble base at position 34 in tRNAs. The proposed mechanism is the following: (i) recruits S-adenosyl-L-methionine and cleaves it to generate a 5'-deoxyadenosine radical (5'-dA) in the radical S-adenosyl-L-methionine (rSAM) region, (ii) hydrolyzes acetyl-CoA in the N-acetyltransferase domain and (iii) an acetyl radical is formed by the products of the two domains and (iv) is transferred onto the C5 position of uridine(34) in the bound tRNA molecule. Does not show protein lysine acetyltransferase activity. This is tRNA uridine(34) acetyltransferase from Methanocaldococcus infernus (strain DSM 11812 / JCM 15783 / ME).